A 242-amino-acid chain; its full sequence is NAD(P)H-hydrate epimerase (242 aa).

A YjeF N-terminal domain is found at 11–221 (AKALDAELMS…KVITKKFNLS (211 aa)). 61–65 (NNGGD) contributes to the (6S)-NADPHX binding site. 2 residues coordinate K(+): Asn-62 and Asp-128. (6S)-NADPHX-binding positions include 132 to 138 (GFSFKGP) and Asp-161. Ser-164 provides a ligand contact to K(+).

This sequence belongs to the NnrE/AIBP family. It depends on K(+) as a cofactor.

Its subcellular location is the cytoplasm. The protein resides in the mitochondrion. It localises to the nucleus. It catalyses the reaction (6R)-NADHX = (6S)-NADHX. The catalysed reaction is (6R)-NADPHX = (6S)-NADPHX. Its function is as follows. Catalyzes the epimerization of the S- and R-forms of NAD(P)HX, a damaged form of NAD(P)H that is a result of enzymatic or heat-dependent hydration. This is a prerequisite for the S-specific NAD(P)H-hydrate dehydratase to allow the repair of both epimers of NAD(P)HX. May have a role in meiosis. In Schizosaccharomyces pombe (strain 972 / ATCC 24843) (Fission yeast), this protein is NAD(P)H-hydrate epimerase (mug182).